Reading from the N-terminus, the 917-residue chain is ABC transporter A family member 12 (917 aa).

Helical transmembrane passes span 34–54 (LILVPLFLCLILLAIQQVLDA), 323–343 (IASLLGPLFFTWVVLLLFPVI), 377–397 (FLTISMLYVISLVGFGSAIGL), 409–429 (FVFYFIYSNLQISLAFLVSSI), 435–455 (TVTVIAYILVYGTGLLGSFLF), and 508–528 (GEVFCIMSVEWFLALIVAYYI). The region spanning 595–832 (ILCDNLKKVY…YGGSYVFTMT (238 aa)) is the ABC transporter domain. 633–640 (GPNGAGKT) provides a ligand contact to ATP.

This sequence belongs to the ABC transporter superfamily. ABCA family. CPR flippase (TC 3.A.1.211) subfamily.

The protein resides in the membrane. This is ABC transporter A family member 12 (ABCA12) from Arabidopsis thaliana (Mouse-ear cress).